We begin with the raw amino-acid sequence, 923 residues long: Protocadherin gamma-B5 (923 aa).

The N-terminal stretch at 1-30 (MGSGAGELGRAERLPVLFLFLLSLFCPALC) is a signal peptide. Cadherin domains follow at residues 31–133 (EQIR…TPKF), 134–242 (TQNS…PPVF), 243–343 (NRDV…SPEV), 344–448 (TFHS…APVF), 449–558 (HQAS…APRV), and 566–671 (DGSA…LPDI). Over 31–687 (EQIRYRIPEE…SDPQAELQFY (657 aa)) the chain is Extracellular. 2 N-linked (GlcNAc...) asparagine glycosylation sites follow: Asn415 and Asn541. A helical membrane pass occupies residues 688-708 (LVVALALISVLFLLAVILAVA). At 709-923 (LRLRRSSSPA…KKKSGKKEKK (215 aa)) the chain is on the cytoplasmic side. 2 disordered regions span residues 794-832 (TSHP…WPNN) and 893-923 (ATLT…KEKK). The segment covering 807 to 832 (WRFSQAQRPGTSGSQNGDDTGTWPNN) has biased composition (polar residues). Residues 913–923 (NKKKSGKKEKK) show a composition bias toward basic residues.

It localises to the cell membrane. Potential calcium-dependent cell-adhesion protein. May be involved in the establishment and maintenance of specific neuronal connections in the brain. The chain is Protocadherin gamma-B5 (PCDHGB5) from Homo sapiens (Human).